Reading from the N-terminus, the 554-residue chain is Phosphomethylpyrimidine synthase (554 aa).

Substrate-binding positions include Asn-188, Met-217, Tyr-246, His-282, 302–304 (SRG), 343–346 (DGLR), and Glu-382. His-386 is a Zn(2+) binding site. Residue Tyr-409 coordinates substrate. His-450 is a Zn(2+) binding site. Cys-530, Cys-533, and Cys-538 together coordinate [4Fe-4S] cluster.

The protein belongs to the ThiC family. As to quaternary structure, homodimer. The cofactor is [4Fe-4S] cluster.

It catalyses the reaction 5-amino-1-(5-phospho-beta-D-ribosyl)imidazole + S-adenosyl-L-methionine = 4-amino-2-methyl-5-(phosphooxymethyl)pyrimidine + CO + 5'-deoxyadenosine + formate + L-methionine + 3 H(+). It participates in cofactor biosynthesis; thiamine diphosphate biosynthesis. Catalyzes the synthesis of the hydroxymethylpyrimidine phosphate (HMP-P) moiety of thiamine from aminoimidazole ribotide (AIR) in a radical S-adenosyl-L-methionine (SAM)-dependent reaction. The sequence is that of Phosphomethylpyrimidine synthase from Coxiella burnetii (strain Dugway 5J108-111).